The sequence spans 953 residues: Nucleotide-binding oligomerization domain-containing protein 1 (953 aa).

The CARD domain occupies 15-105; that stretch reads ESHPHIQLLK…AYVDLRPWLL (91 aa). One can recognise an NACHT domain in the interval 196–531; that stretch reads ETIFILGDAG…AFFTAFFLVL (336 aa). 202 to 209 is an ATP binding site; sequence GDAGVGKS. 2 S-palmitoyl cysteine lipidation sites follow: cysteine 558 and cysteine 567. LRR repeat units follow at residues 632 to 656, 702 to 725, 727 to 750, 755 to 778, 783 to 806, 839 to 862, 867 to 891, 895 to 918, and 923 to 946; these read LKSL…IWML, FPKR…ELQP, FSRL…VLSE, YKIV…YVTK, CKGL…YLAL, HPSL…SLAR, NTSL…LAEM, NQTL…QLAD, and NTGI…VYED. Cysteine 952 is lipidated: S-palmitoyl cysteine.

Belongs to the NOD1-NOD2 family. As to quaternary structure, homooligomer: homooligomerizes following ligand-binding, promoting RIPK2 recruitment. Interacts (via CARD domain) with RIPK2 (via CARD domain). Following RIPK2 recruitment, RIPK2 homooligomerizes via its CARD domain and forms long filaments named RIPosomes. Interacts with ARHGEF2. Interacts (via CARD domain) with ubiquitin; inhibiting interaction with RIPK2. Interacts with NLRP10 and recruits it to the cell membrane following invasive bacterial infection. Interacts with IFIH1; this interaction promotes transcription of antiviral genes and inhibition of viral replication. Interacts with IRGM; promoting NOD1 degradation. Interacts with ATG16L1. Palmitoylated. Palmitoylation is required for proper recruitment to the bacterial entry site and hence for proper signaling upon cognate peptidoglycan detection. In terms of processing, ubiquitinated. 'Lys-48'-linked polyubiquitination by RNF34 promotes proteasomal degradation and thereby negatively regulates NOD1 for instance in NF-kappa-B activation. Post-translationally, degraded via selective autophagy following interaction with IRGM. IRGM promotes NOD1-RIPK2 RIPosome recruitment to autophagosome membranes, promoting their SQSTM1/p62-dependent autophagic degradation. Highly expressed in adult heart, skeletal muscle, pancreas, spleen and ovary. Also detected in placenta, lung, liver, kidney, thymus, testis, small intestine and colon.

The protein localises to the cell membrane. It localises to the apical cell membrane. It is found in the basolateral cell membrane. The protein resides in the cytoplasm. Functionally, pattern recognition receptor (PRR) that detects bacterial peptidoglycan fragments and other danger signals and thus participates in both innate and adaptive immune responses. Specifically recognizes and binds gamma-D-glutamyl-meso-diaminopimelic acid (iE-DAP), a dipeptide present in peptidoglycan of Gram-negative bacteria. Preferentially binds iE-DAP in tripeptide-containing muropeptides (MurNAc-TriDAP or TriDAP). Ligand binding triggers oligomerization that facilitates the binding and subsequent activation of the proximal adapter receptor-interacting RIPK2. Following recruitment, RIPK2 undergoes 'Met-1'- (linear) and 'Lys-63'-linked polyubiquitination by E3 ubiquitin-protein ligases XIAP, BIRC2, BIRC3 and the LUBAC complex, becoming a scaffolding protein for downstream effectors, triggering activation of the NF-kappa-B and MAP kinases signaling. This in turn leads to the transcriptional activation of hundreds of genes involved in immune response. Also acts as a regulator of antiviral response elicited by dsRNA and the expression of RLR pathway members by targeting IFIH1 and TRAF3 to modulate the formation of IFIH1-MAVS and TRAF3-MAVS complexes leading to increased transcription of type I IFNs. Also acts as a regulator of autophagy via its interaction with ATG16L1, possibly by recruiting ATG16L1 at the site of bacterial entry. Besides recognizing pathogens, also involved in the endoplasmic reticulum stress response: acts by sensing and binding to the cytosolic metabolite sphingosine-1-phosphate generated in response to endoplasmic reticulum stress, initiating an inflammation process that leads to activation of the NF-kappa-B and MAP kinases signaling. In addition, plays a role in insulin trafficking in beta cells in a cell-autonomous manner. Mechanistically, upon recognizing cognate ligands, NOD1 and RIPK2 localize to insulin vesicles where they recruit RAB1A to direct insulin trafficking through the cytoplasm. Its function is as follows. In contrast to isoform 1, does not efficiently recognize and bind gamma-D-glutamyl-meso-diaminopimelic acid (iE-DAP) ligand. The chain is Nucleotide-binding oligomerization domain-containing protein 1 from Homo sapiens (Human).